The sequence spans 246 residues: ATP synthase subunit a, chloroplastic (246 aa).

The next 5 helical transmembrane spans lie at 33 to 53, 99 to 119, 133 to 153, 201 to 221, and 222 to 242; these read VHGQVLLVSWFVLAVIIGFGL, TIFLFVFVSNWSGALVPWALI, INTTVALALLTSIAYFYAGIN, GVLVALVPLVIPIPLMLLGLF, and TSAIQALVFSTLAGAYIGESL.

The protein belongs to the ATPase A chain family. F-type ATPases have 2 components, CF(1) - the catalytic core - and CF(0) - the membrane proton channel. CF(1) has five subunits: alpha(3), beta(3), gamma(1), delta(1), epsilon(1). CF(0) has four main subunits: a, b, b' and c.

It is found in the plastid. Its subcellular location is the chloroplast thylakoid membrane. Functionally, key component of the proton channel; it plays a direct role in the translocation of protons across the membrane. This is ATP synthase subunit a, chloroplastic from Oltmannsiellopsis viridis (Marine flagellate).